Consider the following 402-residue polypeptide: Indole-3-glycerol phosphate synthase, chloroplastic (402 aa).

The transit peptide at 1-65 (MEGLVPVQRL…SDLKESLAVS (65 aa)) directs the protein to the chloroplast.

It belongs to the TrpC family. Expressed in leaves.

It is found in the plastid. The protein resides in the chloroplast. It carries out the reaction 1-(2-carboxyphenylamino)-1-deoxy-D-ribulose 5-phosphate + H(+) = (1S,2R)-1-C-(indol-3-yl)glycerol 3-phosphate + CO2 + H2O. Its pathway is amino-acid biosynthesis; L-tryptophan biosynthesis; L-tryptophan from chorismate: step 4/5. Its function is as follows. Indole-3-glycerol phosphate synthase required for tryptophan biosynthesis. The polypeptide is Indole-3-glycerol phosphate synthase, chloroplastic (Arabidopsis thaliana (Mouse-ear cress)).